Here is a 994-residue protein sequence, read N- to C-terminus: MAASFFSDFGLMWYLEELKKEEFRKFKEHLKQMTLQLELKQIPWTEVKKASREELANLLIKHYEEQQAWNITLRIFQKMDRKDLCMKVMRERTGYTKTYQAHAKQKFSRLWSSKSVTEIHLYFEEEVKQEECDHLDRLFAPKEAGKQPRTVIIQGPQGIGKTTLLMKLMMAWSDNKIFRDRFLYTFYFCCRELRELPPTSLADLISREWPDPAAPITEIVSQPERLLFVIDSFEELQGGLNEPDSDLCGDLMEKRPVQVLLSSLLRKKMLPEASLLIAIKPVCPKELRDQVTISEIYQPRGFNESDRLVYFCCFFKDPKRAMEAFNLVRESEQLFSICQIPLLCWILCTSLKQEMQKGKDLALTCQSTTSVYSSFVFNLFTPEGAEGPTPQTQHQLKALCSLAAEGMWTDTFEFCEDDLRRNGVVDADIPALLGTKILLKYGERESSYVFLHVCIQEFCAALFYLLKSHLDHPHPAVRCVQELLVANFEKARRAHWIFLGCFLTGLLNKKEQEKLDAFFGFQLSQEIKQQIHQCLKSLGERGNPQGQVDSLAIFYCLFEMQDPAFVKQAVNLLQEANFHIIDNVDLVVSAYCLKYCSSLRKLCFSVQNVFKKEDEHSSTSDYSLICWHHICSVLTTSGHLRELQVQDSTLSESTFVTWCNQLRHPSCRLQKLGINNVSFSGQSVLLFEVLFYQPDLKYLSFTLTKLSRDDIRSLCDALNYPAGNVKELALVNCHLSPIDCEVLAGLLTNNKKLTYLNVSCNQLDTGVPLLCEALCSPDTVLVYLMLAFCHLSEQCCEYISEMLLRNKSVRYLDLSANVLKDEGLKTLCEALKHPDCCLDSLCLVKCFITAAGCEDLASALISNQNLKILQIGCNEIGDVGVQLLCRALTHTDCRLEILGLEECGLTSTCCKDLASVLTCSKTLQQLNLTLNTLDHTGVVVLCEALRHPECALQVLGLRKTDFDEETQALLTAEEERNPNLTITDDCDTITRVEI.

Positions 1–94 (MAASFFSDFG…CMKVMRERTG (94 aa)) constitute a Pyrin domain. Residues 149-472 (RTVIIQGPQG…FYLLKSHLDH (324 aa)) form the NACHT domain. Position 155 to 162 (155 to 162 (GPQGIGKT)) interacts with ATP. LRR repeat units lie at residues 637 to 660 (SGHL…TWCN), 698 to 721 (YLSF…LNYP), 722 to 745 (AGNV…VLAG), 750 to 777 (NKKL…LCSP), 806 to 833 (NKSV…ALKH), 863 to 886 (NQNL…LLCR), 920 to 943 (SKTL…VLCE), and 949 to 972 (ECAL…LLTA).

Belongs to the NLRP family. Interacts with CHUK/IKKA, inhibiting its kinase activity.

In terms of biological role, may be involved in inflammation and recognition of cytosolic pathogen-associated molecular patterns (PAMPs) not intercepted by membrane-bound receptors. Acts as a negative regulator of the type I interferon signaling pathway by serving as an adapter to promote DTX4-mediated ubiquitination of activated TBK1, and its subsequent degradation. Suppresses NF-kappaB induction by the cytokines TNFA and IL1B, suggesting that it operates at a point of convergence in these two cytokine signaling pathways. This is NACHT, LRR and PYD domains-containing protein 4 from Homo sapiens (Human).